Here is a 213-residue protein sequence, read N- to C-terminus: Adenylate kinase (213 aa).

Position 10-15 (10-15) interacts with ATP; sequence GAGKGT. Residues 30–59 are NMP; the sequence is STGDMLRAALKEGTPLGLEAKKYMDQGALV. Residues Thr-31, Arg-36, 57–59, 85–88, and Gln-92 each bind AMP; these read ALV and GFPR. An LID region spans residues 126–163; the sequence is GRRTCRSCGAGFHVMFDPPKTDGKCDKCGGELYQRDDD. Position 127 (Arg-127) interacts with ATP. Residues Cys-130, Cys-133, Cys-150, and Cys-153 each coordinate Zn(2+). AMP-binding residues include Arg-160 and Arg-171. Position 199 (Gly-199) interacts with ATP.

Belongs to the adenylate kinase family. In terms of assembly, monomer.

It localises to the cytoplasm. The enzyme catalyses AMP + ATP = 2 ADP. It functions in the pathway purine metabolism; AMP biosynthesis via salvage pathway; AMP from ADP: step 1/1. Catalyzes the reversible transfer of the terminal phosphate group between ATP and AMP. Plays an important role in cellular energy homeostasis and in adenine nucleotide metabolism. This chain is Adenylate kinase, found in Syntrophobacter fumaroxidans (strain DSM 10017 / MPOB).